The primary structure comprises 546 residues: uncharacterized protein (546 aa).

5 consecutive transmembrane segments (helical) span residues 4-23 (ILLE…GYPL), 30-47 (GSSL…AMGS), 57-79 (IVYV…PAFV), 91-113 (ALII…LLGF), and 155-177 (PVVG…ISLV). RCK C-terminal domains lie at 189-274 (GKRL…FLGE) and 275-359 (VSEE…FFGD). 6 helical membrane-spanning segments follow: residues 372-394 (FSLG…GGIT), 399-421 (FAGG…SMVW), 434-456 (IGLV…TTLA), 460-482 (GLAI…LWIG), 489-511 (PMSI…GYAL), and 521-543 (IGYA…ILLT).

It belongs to the AAE transporter (TC 2.A.81) family.

It localises to the cell membrane. This is an uncharacterized protein from Geobacter sulfurreducens (strain ATCC 51573 / DSM 12127 / PCA).